The sequence spans 190 residues: Imidazoleglycerol-phosphate dehydratase (190 aa).

This sequence belongs to the imidazoleglycerol-phosphate dehydratase family.

It is found in the cytoplasm. The catalysed reaction is D-erythro-1-(imidazol-4-yl)glycerol 3-phosphate = 3-(imidazol-4-yl)-2-oxopropyl phosphate + H2O. It functions in the pathway amino-acid biosynthesis; L-histidine biosynthesis; L-histidine from 5-phospho-alpha-D-ribose 1-diphosphate: step 6/9. The chain is Imidazoleglycerol-phosphate dehydratase from Methanococcus vannielii (strain ATCC 35089 / DSM 1224 / JCM 13029 / OCM 148 / SB).